A 344-amino-acid chain; its full sequence is Heat-inducible transcription repressor HrcA (344 aa).

This sequence belongs to the HrcA family.

In terms of biological role, negative regulator of class I heat shock genes (grpE-dnaK-dnaJ and groELS operons). Prevents heat-shock induction of these operons. The sequence is that of Heat-inducible transcription repressor HrcA from Geobacillus kaustophilus (strain HTA426).